We begin with the raw amino-acid sequence, 283 residues long: MTETRRLRILITNDDGIKAKGISLLISLLREADFADLYVVAPLEEQSGRSMAFSLVEPTALEPFDYPQRVQEAWAVTGTPVDCVKLAIGELFKENALDLILSGINNGKNSGRCLYYSATVGAIREANLHGIPAIALSQSENIAFFQEAHMASLIRSLCEFTVAYKHTDPLGLNVNFPASADDSPWKGIRFTLSGNEFLFGIPRLVRTEGNRRYYTLYDMRDKVSEEFSEEYLALANNYISAAPLVSKNTPRATLSEEELAFLKDSFEQSVLWKASLNLEEDLA.

Residues Asp-14, Asp-15, Ser-47, and Asn-105 each coordinate a divalent metal cation.

It belongs to the SurE nucleotidase family. A divalent metal cation serves as cofactor.

It localises to the cytoplasm. It catalyses the reaction a ribonucleoside 5'-phosphate + H2O = a ribonucleoside + phosphate. Nucleotidase that shows phosphatase activity on nucleoside 5'-monophosphates. The chain is 5'-nucleotidase SurE from Chlamydia trachomatis serovar L2 (strain ATCC VR-902B / DSM 19102 / 434/Bu).